A 288-amino-acid polypeptide reads, in one-letter code: 2-hydroxy-6-oxononadienedioate/2-hydroxy-6-oxononatrienedioate hydrolase (288 aa).

H267 acts as the Proton acceptor in catalysis.

Belongs to the AB hydrolase superfamily. MhpC family. In terms of assembly, homodimer.

It catalyses the reaction (2Z,4E)-2-hydroxy-6-oxonona-2,4-dienedioate + H2O = (2Z)-2-hydroxypenta-2,4-dienoate + succinate + H(+). The catalysed reaction is (2Z,4E,7E)-2-hydroxy-6-oxonona-2,4,7-trienedioate + H2O = (2Z)-2-hydroxypenta-2,4-dienoate + fumarate + H(+). It participates in aromatic compound metabolism; 3-phenylpropanoate degradation. Catalyzes the cleavage of the C5-C6 bond of 2-hydroxy-6-oxononadienedioate and 2-hydroxy-6-oxononatrienedioate, a dienol ring fission product of the bacterial meta-cleavage pathway for degradation of phenylpropionic acid. This is 2-hydroxy-6-oxononadienedioate/2-hydroxy-6-oxononatrienedioate hydrolase from Klebsiella pneumoniae subsp. pneumoniae (strain ATCC 700721 / MGH 78578).